The following is a 324-amino-acid chain: NADH-ubiquinone oxidoreductase chain 1 (324 aa).

The next 9 membrane-spanning stretches (helical) occupy residues 9–29 (LINPLAYIIPILLATAFLTLI), 43–63 (PNIVGPYGLLQPIADGLKLFI), 77–97 (FLATPTVALALALLMWMPLPL), 106–126 (LGLLFILAISSLTVYTILGSG), 146–166 (ISYEVSLGLILLSMIIFAGGF), 177–197 (TIWLLIPGWPLAFMWYISTLA), 228–248 (LFFLAEYTNILLMNTLSVILF), 259–279 (QISSLSLMMKASMLTVLFLWI), and 299–319 (FLPLTLAIILWHMALPLATTS).

The protein belongs to the complex I subunit 1 family.

The protein localises to the mitochondrion inner membrane. It catalyses the reaction a ubiquinone + NADH + 5 H(+)(in) = a ubiquinol + NAD(+) + 4 H(+)(out). Core subunit of the mitochondrial membrane respiratory chain NADH dehydrogenase (Complex I) that is believed to belong to the minimal assembly required for catalysis. Complex I functions in the transfer of electrons from NADH to the respiratory chain. The immediate electron acceptor for the enzyme is believed to be ubiquinone. This chain is NADH-ubiquinone oxidoreductase chain 1 (MT-ND1), found in Scyliorhinus canicula (Small-spotted catshark).